Reading from the N-terminus, the 179-residue chain is Large ribosomal subunit protein uL16m (179 aa).

The protein belongs to the universal ribosomal protein uL16 family. Component of the mitochondrial ribosome large subunit.

It is found in the mitochondrion. The sequence is that of Large ribosomal subunit protein uL16m (RPL16) from Arabidopsis thaliana (Mouse-ear cress).